The sequence spans 1505 residues: Phosphatidylinositol 3-kinase C2 domain-containing subunit gamma (1505 aa).

The interval 1–32 (MAYNWQTEPNRAEPQEGGHDHQQCHHADQHLS) is disordered. Over residues 10-31 (NRAEPQEGGHDHQQCHHADQHL) the composition is skewed to basic and acidic residues. One can recognise a PI3K-RBD domain in the interval 278–370 (PSRLFADTQF…IQLHLQRSRD (93 aa)). Residues 540–688 (LHSHLSFTVC…TPLTLQIDFP (149 aa)) enclose the C2 PI3K-type domain. Positions 703-879 (RTDHQEPPRE…QELLAALQFC (177 aa)) constitute a PIK helical domain. Positions 948–1226 (DRDACSYFTS…KIKQSLECFP (279 aa)) constitute a PI3K/PI4K catalytic domain. The interval 954-960 (YFTSNAL) is G-loop. Positions 1090–1098 (GVCDRHNDN) are catalytic loop. The activation loop stretch occupies residues 1109 to 1135 (HIDFGKFLGHAQTFGGIKRDRAPFIFT). The PX domain occupies 1259–1371 (LNKTRTIQRV…SFFLSEHIQQ (113 aa)). Residues 1384-1505 (HSPDKSPQVQ…KWYPLGNSII (122 aa)) form the C2 domain.

This sequence belongs to the PI3/PI4-kinase family. Predominantly expressed in normal liver. High levels also found in regenerating liver. Very low levels found in heart and testis.

Its subcellular location is the membrane. It catalyses the reaction a 1,2-diacyl-sn-glycero-3-phospho-(1D-myo-inositol) + ATP = a 1,2-diacyl-sn-glycero-3-phospho-(1D-myo-inositol-3-phosphate) + ADP + H(+). The enzyme catalyses a 1,2-diacyl-sn-glycero-3-phospho-(1D-myo-inositol 4-phosphate) + ATP = a 1,2-diacyl-sn-glycero-3-phospho-(1D-myo-inositol-3,4-bisphosphate) + ADP + H(+). Its function is as follows. Generates phosphatidylinositol 3-phosphate (PtdIns3P) and phosphatidylinositol 3,4-bisphosphate (PtdIns(3,4)P2) that act as second messengers. May play a role in SDF1A-stimulated chemotaxis. The polypeptide is Phosphatidylinositol 3-kinase C2 domain-containing subunit gamma (Pik3c2g) (Rattus norvegicus (Rat)).